The primary structure comprises 103 residues: Large ribosomal subunit protein bL21 (103 aa).

It belongs to the bacterial ribosomal protein bL21 family. In terms of assembly, part of the 50S ribosomal subunit. Contacts protein L20.

Its function is as follows. This protein binds to 23S rRNA in the presence of protein L20. The sequence is that of Large ribosomal subunit protein bL21 from Parvibaculum lavamentivorans (strain DS-1 / DSM 13023 / NCIMB 13966).